Reading from the N-terminus, the 278-residue chain is DNA repair protein RecO (278 aa).

Positions 1 to 12 (MGTNDALTSTED) are enriched in polar residues. The interval 1–41 (MGTNDALTSTEDAVTAGANDAPLPAPPEPPRKARRATSRTS) is disordered.

It belongs to the RecO family.

In terms of biological role, involved in DNA repair and RecF pathway recombination. This Burkholderia orbicola (strain AU 1054) protein is DNA repair protein RecO.